Here is a 439-residue protein sequence, read N- to C-terminus: Lipid-A-disaccharide synthase (439 aa).

The interval 1–35 is disordered; sequence MKEIGNRESGIVDGQRNGASVGSDPTALPIPHSPL.

It belongs to the LpxB family.

The catalysed reaction is a lipid X + a UDP-2-N,3-O-bis[(3R)-3-hydroxyacyl]-alpha-D-glucosamine = a lipid A disaccharide + UDP + H(+). It participates in bacterial outer membrane biogenesis; LPS lipid A biosynthesis. Functionally, condensation of UDP-2,3-diacylglucosamine and 2,3-diacylglucosamine-1-phosphate to form lipid A disaccharide, a precursor of lipid A, a phosphorylated glycolipid that anchors the lipopolysaccharide to the outer membrane of the cell. The protein is Lipid-A-disaccharide synthase of Xanthomonas euvesicatoria pv. vesicatoria (strain 85-10) (Xanthomonas campestris pv. vesicatoria).